We begin with the raw amino-acid sequence, 165 residues long: Protein SprT (165 aa).

Positions 20-163 constitute a SprT-like domain; the sequence is EKLAQANLKL…RCVHCGEQLV (144 aa). Zn(2+) is bound at residue His78. Glu79 is an active-site residue. His82 is a Zn(2+) binding site.

Belongs to the SprT family. The cofactor is Zn(2+).

The protein resides in the cytoplasm. This is Protein SprT from Shigella flexneri serotype 5b (strain 8401).